The sequence spans 349 residues: Divinyl chlorophyll a/b light-harvesting protein PcbB (349 aa).

6 helical membrane passes run 27 to 47 (FIAA…AATL), 57 to 77 (LPMG…GIGF), 91 to 113 (IAIL…SVYF), 201 to 221 (VMGG…FHIA), 241 to 261 (AILS…AFWA), and 306 to 326 (LVNV…WHAL).

This sequence belongs to the PsbB/PsbC family. IsiA/Pcb subfamily. The antenna complex consists of divinyl chlorophylls (a and b) and divinyl chlorophyll a/b binding proteins and binds more divinyl chlorophyll b than does the antenna complex from high-light-adapted Prochlorococcus. Divinyl chlorophyll a is required as a cofactor. Requires divinyl chlorophyll b as cofactor.

The protein localises to the cellular thylakoid membrane. The antenna complex functions as a light receptor, it captures and delivers excitation energy to photosystems II and I. The Prochlorales pcb genes are not related to higher plant LHCs. The polypeptide is Divinyl chlorophyll a/b light-harvesting protein PcbB (pcbB) (Prochlorococcus marinus (strain SARG / CCMP1375 / SS120)).